The primary structure comprises 143 residues: Large ribosomal subunit protein uL16c (143 aa).

The protein belongs to the universal ribosomal protein uL16 family. As to quaternary structure, part of the 50S ribosomal subunit.

The protein localises to the plastid. It localises to the chloroplast. This is Large ribosomal subunit protein uL16c from Cyanidioschyzon merolae (strain NIES-3377 / 10D) (Unicellular red alga).